The primary structure comprises 86 residues: uncharacterized protein (86 aa).

2 consecutive 4Fe-4S ferredoxin-type domains span residues 1 to 29 (MALLITSKCTNCDMCLPECPNEAISIGDE) and 31 to 65 (YVIDPILCTECVGHYDTPTCQKVCPITNCIKPDPE). Cys9, Cys12, Cys15, Cys19, Cys38, Cys41, Cys50, and Cys54 together coordinate [4Fe-4S] cluster.

Requires [4Fe-4S] cluster as cofactor.

This is an uncharacterized protein from Haemophilus influenzae (strain ATCC 51907 / DSM 11121 / KW20 / Rd).